Reading from the N-terminus, the 276-residue chain is Large ribosomal subunit protein uL2 (276 aa).

The segment at 225 to 276 is disordered; it reads VMNPVDHPHGGGEGKTAAGRDPVSPWGTPTKGYRTRSNKRTDSMIVQKRHKR.

It belongs to the universal ribosomal protein uL2 family. In terms of assembly, part of the 50S ribosomal subunit. Forms a bridge to the 30S subunit in the 70S ribosome.

Functionally, one of the primary rRNA binding proteins. Required for association of the 30S and 50S subunits to form the 70S ribosome, for tRNA binding and peptide bond formation. It has been suggested to have peptidyltransferase activity; this is somewhat controversial. Makes several contacts with the 16S rRNA in the 70S ribosome. This Cupriavidus taiwanensis (strain DSM 17343 / BCRC 17206 / CCUG 44338 / CIP 107171 / LMG 19424 / R1) (Ralstonia taiwanensis (strain LMG 19424)) protein is Large ribosomal subunit protein uL2.